The chain runs to 422 residues: Probable glycosidase CRR1 (422 aa).

The signal sequence occupies residues methionine 1 to glycine 20. The GH16 domain maps to aspartate 67 to lysine 339. The Nucleophile role is filled by glutamate 217. Glutamate 221 acts as the Proton donor in catalysis.

Belongs to the glycosyl hydrolase 16 family. CRR1 subfamily.

It localises to the spore wall. Spore specific glycosidase involved in spore wall assembly during sporulation. May be involved in copper import. The chain is Probable glycosidase CRR1 (CRR1) from Saccharomyces cerevisiae (strain ATCC 204508 / S288c) (Baker's yeast).